The chain runs to 110 residues: Phosphoribosyl-AMP cyclohydrolase (110 aa).

Asp80 lines the Mg(2+) pocket. Cys81 contributes to the Zn(2+) binding site. Mg(2+) contacts are provided by Asp82 and Asp84. 2 residues coordinate Zn(2+): Cys97 and Cys104.

It belongs to the PRA-CH family. As to quaternary structure, homodimer. Mg(2+) is required as a cofactor. It depends on Zn(2+) as a cofactor.

It is found in the cytoplasm. The catalysed reaction is 1-(5-phospho-beta-D-ribosyl)-5'-AMP + H2O = 1-(5-phospho-beta-D-ribosyl)-5-[(5-phospho-beta-D-ribosylamino)methylideneamino]imidazole-4-carboxamide. The protein operates within amino-acid biosynthesis; L-histidine biosynthesis; L-histidine from 5-phospho-alpha-D-ribose 1-diphosphate: step 3/9. In terms of biological role, catalyzes the hydrolysis of the adenine ring of phosphoribosyl-AMP. The sequence is that of Phosphoribosyl-AMP cyclohydrolase from Clostridium botulinum (strain Okra / Type B1).